The sequence spans 100 residues: Protein translation factor SUI1 homolog (100 aa).

Belongs to the SUI1 family.

The protein is Protein translation factor SUI1 homolog of Sulfurisphaera tokodaii (strain DSM 16993 / JCM 10545 / NBRC 100140 / 7) (Sulfolobus tokodaii).